Here is a 114-residue protein sequence, read N- to C-terminus: Biofilm growth-associated repressor (114 aa).

The 95-residue stretch at 17–111 (DMEKRANEVA…ALYTIFCAQE (95 aa)) folds into the HTH arsR-type domain. Positions 51–74 (VGELEQQIGIGQPTLSQQLGVLRE) form a DNA-binding region, H-T-H motif.

Represses an operon that comprises itself, XF_0764, XF_0765, XF_0766 and blh. Binds to a palindromic AT-rich sequence spanning the -10 region of the blh promoter and blocks transcription of the operon. This Xylella fastidiosa (strain 9a5c) protein is Biofilm growth-associated repressor (bigR).